Reading from the N-terminus, the 71-residue chain is Large ribosomal subunit protein bL31 (71 aa).

Residues C16, C18, C37, and C40 each coordinate Zn(2+).

The protein belongs to the bacterial ribosomal protein bL31 family. Type A subfamily. In terms of assembly, part of the 50S ribosomal subunit. It depends on Zn(2+) as a cofactor.

Its function is as follows. Binds the 23S rRNA. This chain is Large ribosomal subunit protein bL31, found in Mannheimia succiniciproducens (strain KCTC 0769BP / MBEL55E).